A 354-amino-acid polypeptide reads, in one-letter code: MNALKNDRYLRALLRQSVDVTPVWMMRQAGRYLPEYQATRAKAGDFIALCKNTELACEVTLQPLQRYPLDAAILFSDILTIPDAMGLGLYFEAGEGPRFKSPVFSRADVEKLPVPDPEMELSYVTDAVRAIRKALAGQVPLIGFSGSPWTLATYMVEGGSSKAFTKIKKMMYAEPTVMHLLLDKLADSVILYLNAQIKAGAQSVMVFDTWGGVLTGRDYREFSLHYMHKIVDGLIRENEGRRVPVTLFAKGGGQWLEAMAETGCDALGLDWTTDIADARRRVGNKVALQGNMDPSMLYASPERIEQEVSTILQGFGTGSGHVFNLGHGIHQDILPEHAGVFVEAVHKLSAKYHQ.

Residues Arg27–Arg31, Phe46, Asp77, Tyr154, Thr209, and His327 contribute to the substrate site.

The protein belongs to the uroporphyrinogen decarboxylase family. As to quaternary structure, homodimer.

Its subcellular location is the cytoplasm. The catalysed reaction is uroporphyrinogen III + 4 H(+) = coproporphyrinogen III + 4 CO2. It functions in the pathway porphyrin-containing compound metabolism; protoporphyrin-IX biosynthesis; coproporphyrinogen-III from 5-aminolevulinate: step 4/4. Catalyzes the decarboxylation of four acetate groups of uroporphyrinogen-III to yield coproporphyrinogen-III. The protein is Uroporphyrinogen decarboxylase of Photorhabdus laumondii subsp. laumondii (strain DSM 15139 / CIP 105565 / TT01) (Photorhabdus luminescens subsp. laumondii).